A 362-amino-acid chain; its full sequence is Cell death regulator Aven (362 aa).

Disordered regions lie at residues methionine 1–lysine 111, valine 214–glycine 237, and valine 253–serine 362. Over residues arginine 8–arginine 17 the composition is skewed to basic residues. The segment covering arginine 37–glycine 47 has biased composition (gly residues). Over residues arginine 50 to arginine 60 the composition is skewed to basic residues. Residues glycine 61–proline 72 are compositionally biased toward gly residues. Over residues valine 90 to glutamate 105 the composition is skewed to acidic residues. Serine 94 is modified (phosphoserine). Lysine 230 is modified (N6-methyllysine). Positions glutamate 350 to serine 362 are enriched in acidic residues.

Binds Apaf-1, BCL-2 and BAD (Bcl-xl). As to expression, highly expressed in testis, ovary, thymus, prostate, spleen, small intestine, colon, heart, skeletal muscle, liver, kidney and pancreas.

The protein resides in the endomembrane system. Its function is as follows. Protects against apoptosis mediated by Apaf-1. In Homo sapiens (Human), this protein is Cell death regulator Aven (AVEN).